Consider the following 538-residue polypeptide: Potassium channel subfamily K member 10 (538 aa).

The Cytoplasmic segment spans residues 1-71 (MFFLYTDFFL…GLQTVMKWKT (71 aa)). The chain crosses the membrane as a helical span at residues 72-92 (VVAIFVVVVVYLVTGGLVFRA). N-linked (GlcNAc...) asparagine glycans are attached at residues asparagine 144, asparagine 147, and asparagine 148. An intramembrane region (pore-forming) is located at residues 154 to 180 (LGSAFFFAGTVITTIGYGNIAPSTEGG). K(+) is bound by residues threonine 167, isoleucine 168, glycine 169, and tyrosine 170. The tract at residues 167 to 172 (TIGYGN) is selectivity filter 1. Residues 182-202 (IFCILYAIFGIPLFGFLLAGI) traverse the membrane as a helical segment. Topologically, residues 203 to 233 (GDQLGTIFGKSIARVEKVFRKKQVSQTKIRV) are cytoplasmic. The chain crosses the membrane as a helical span at residues 234-254 (ISTILFILAGCIVFVTIPAVI). The segment at residues 263–294 (ALESIYFVVVTLTTVGFGDFVAGGNAGINYRE) is an intramembrane region (pore-forming). Threonine 276, valine 277, glycine 278, and phenylalanine 279 together coordinate K(+). The interval 276–281 (TVGFGD) is selectivity filter 2. Residues 299-319 (LVWFWILVGLAYFAAVLSMIG) traverse the membrane as a helical segment. Topologically, residues 320–538 (DWLRVLSKKT…ENNSLLEDRN (219 aa)) are cytoplasmic. The segment covering 412 to 421 (SQESINNRPN) has biased composition (polar residues). Disordered regions lie at residues 412–443 (SQES…EDNI) and 510–538 (QHAE…EDRN). Basic and acidic residues predominate over residues 522-538 (DTKDREPENNSLLEDRN).

The protein belongs to the two pore domain potassium channel (TC 1.A.1.8) family. As to quaternary structure, homodimer; disulfide-linked. Forms heterodimers with other 2-pore domain K(+) channel subunits, such as KCNK2, KCNK4 and KCNK18. Abundantly expressed in pancreas and kidney and to a lower level in brain, testis, colon, and small intestine. In brain, mainly expressed in cerebellum, occipital lobe, putamen, and thalamus. No expression is detected in amygdala and spinal cord. In terms of tissue distribution, strongly expressed in kidney (primarily in the proximal tubule) and pancreas. As to expression, abundantly expressed in brain.

The protein localises to the cell membrane. It carries out the reaction K(+)(in) = K(+)(out). The catalysed reaction is Rb(+)(in) = Rb(+)(out). It catalyses the reaction Cs(+)(in) = Cs(+)(out). Its activity is regulated as follows. Activated by various stimuli including acidic pH, anesthetics chloroform, halothane and isoflurane, mechanical stretch, lipids such as arachidonic, docosahexaenoic and linoleic polyunsaturated fatty acids and lysophosphatidylcholine and lysophosphatidylinositol lysophospholipids. Inhibited by norfluoxetine, the active metabolite of antidepressant fluoxetine (Prozac). In terms of biological role, k(+) channel that conducts voltage-dependent outward rectifying currents upon membrane depolarization. Voltage sensing is coupled to K(+) electrochemical gradient in an 'ion flux gating' mode where outward but not inward ion flow opens the gate. Converts to voltage-independent 'leak' conductance mode upon stimulation by various stimuli including mechanical membrane stretch, acidic pH, heat and lipids. Homo- and heterodimerizes to form functional channels with distinct regulatory and gating properties. In trigeminal ganglia sensory neurons, the heterodimer of KCNK10/TREK-2 and KCNK18/TRESK inhibits neuronal firing and neurogenic inflammation by stabilizing the resting membrane potential at K(+) equilibrium potential as well as by regulating the threshold of action potentials and the spike frequency. Permeable to other monovalent ions such as Rb(+) and Cs(+). In Homo sapiens (Human), this protein is Potassium channel subfamily K member 10.